Here is a 138-residue protein sequence, read N- to C-terminus: Large ribosomal subunit protein bL19 (138 aa).

This sequence belongs to the bacterial ribosomal protein bL19 family.

In terms of biological role, this protein is located at the 30S-50S ribosomal subunit interface and may play a role in the structure and function of the aminoacyl-tRNA binding site. The sequence is that of Large ribosomal subunit protein bL19 from Leptospira interrogans serogroup Icterohaemorrhagiae serovar Lai (strain 56601).